A 720-amino-acid chain; its full sequence is 1,4-alpha-glucan branching enzyme GlgB (720 aa).

The Nucleophile role is filled by Asp400. Catalysis depends on Glu453, which acts as the Proton donor.

The protein belongs to the glycosyl hydrolase 13 family. GlgB subfamily. As to quaternary structure, monomer.

It carries out the reaction Transfers a segment of a (1-&gt;4)-alpha-D-glucan chain to a primary hydroxy group in a similar glucan chain.. The protein operates within glycan biosynthesis; glycogen biosynthesis. Its function is as follows. Catalyzes the formation of the alpha-1,6-glucosidic linkages in glycogen by scission of a 1,4-alpha-linked oligosaccharide from growing alpha-1,4-glucan chains and the subsequent attachment of the oligosaccharide to the alpha-1,6 position. In Chlamydia pneumoniae (Chlamydophila pneumoniae), this protein is 1,4-alpha-glucan branching enzyme GlgB.